The primary structure comprises 591 residues: BRCA1-associated protein (591 aa).

Ser-52 is modified (phosphoserine). The span at 82 to 93 (DEVRDTVEEKKP) shows a compositional bias: basic and acidic residues. A disordered region spans residues 82 to 124 (DEVRDTVEEKKPSAAPVSAQRSREQSESVNTAPESPSKQLPDQ). Positions 108-124 (ESVNTAPESPSKQLPDQ) are enriched in polar residues. A phosphoserine mark is found at Ser-116 and Ser-118. The RING-type zinc finger occupies 263–303 (CTVCLERMDESVNGILTTLCNHSFHSQCLQRWDDTTCPVCR). Residues 300 to 392 (PVCRYCQTPE…GKIVQYECEG (93 aa)) form a UBP-type; degenerate zinc finger. Zn(2+)-binding residues include Cys-316, Cys-319, Cys-328, Cys-331, Cys-336, His-343, His-347, and His-353. Residues 430 to 536 (EKDTAEEINN…EIQEQLRDVM (107 aa)) are a coiled coil. Positions 563–591 (IAMASAPNPPSSGAGGKLQSRKGRSKRGK) are disordered. The segment covering 581 to 591 (QSRKGRSKRGK) has biased composition (basic residues).

As to quaternary structure, interacts with the nuclear localization signal of BRCA1 and with the N-terminal of KSR1. The C-terminal portion of BRCA1 interacts with DDB1. In terms of tissue distribution, isoform 2 is highly expressed in testis, lower levels in brain, heart, lung, stomach, colon, uterus, liver and kidney. Isoform 1 is only expressed in the testis. Isoform 2 is predominant over isoform 1 in both fetal and adult testis.

The protein resides in the cytoplasm. It carries out the reaction S-ubiquitinyl-[E2 ubiquitin-conjugating enzyme]-L-cysteine + [acceptor protein]-L-lysine = [E2 ubiquitin-conjugating enzyme]-L-cysteine + N(6)-ubiquitinyl-[acceptor protein]-L-lysine.. The protein operates within protein modification; protein ubiquitination. Its function is as follows. Negatively regulates MAP kinase activation by limiting the formation of Raf/MEK complexes probably by inactivation of the KSR1 scaffold protein. Also acts as a Ras responsive E3 ubiquitin ligase that, on activation of Ras, is modified by auto-polyubiquitination resulting in the release of inhibition of Raf/MEK complex formation. May also act as a cytoplasmic retention protein with a role in regulating nuclear transport. The chain is BRCA1-associated protein from Mus musculus (Mouse).